Reading from the N-terminus, the 152-residue chain is 3-dehydroquinate dehydratase (152 aa).

The Proton acceptor role is filled by Tyr23. Substrate contacts are provided by Asn74, His80, and Asp87. His100 functions as the Proton donor in the catalytic mechanism. Residues 101–102 and Arg111 each bind substrate; that span reads LS.

Belongs to the type-II 3-dehydroquinase family. Homododecamer.

It carries out the reaction 3-dehydroquinate = 3-dehydroshikimate + H2O. Its pathway is metabolic intermediate biosynthesis; chorismate biosynthesis; chorismate from D-erythrose 4-phosphate and phosphoenolpyruvate: step 3/7. Its function is as follows. Catalyzes a trans-dehydration via an enolate intermediate. This chain is 3-dehydroquinate dehydratase, found in Clostridium botulinum (strain Langeland / NCTC 10281 / Type F).